A 120-amino-acid chain; its full sequence is NAD(P)H-quinone oxidoreductase subunit 3 (120 aa).

The next 3 membrane-spanning stretches (helical) occupy residues 6 to 26 (GYDA…LALV), 64 to 84 (MFAL…PWAV), and 89 to 109 (LGLL…VALA).

Belongs to the complex I subunit 3 family. In terms of assembly, NDH-1 can be composed of about 15 different subunits; different subcomplexes with different compositions have been identified which probably have different functions.

It is found in the cellular thylakoid membrane. The catalysed reaction is a plastoquinone + NADH + (n+1) H(+)(in) = a plastoquinol + NAD(+) + n H(+)(out). It carries out the reaction a plastoquinone + NADPH + (n+1) H(+)(in) = a plastoquinol + NADP(+) + n H(+)(out). Its function is as follows. NDH-1 shuttles electrons from an unknown electron donor, via FMN and iron-sulfur (Fe-S) centers, to quinones in the respiratory and/or the photosynthetic chain. The immediate electron acceptor for the enzyme in this species is believed to be plastoquinone. Couples the redox reaction to proton translocation, and thus conserves the redox energy in a proton gradient. Cyanobacterial NDH-1 also plays a role in inorganic carbon-concentration. This is NAD(P)H-quinone oxidoreductase subunit 3 from Prochlorococcus marinus (strain SARG / CCMP1375 / SS120).